Here is a 24-residue protein sequence, read N- to C-terminus: Brevinin-1Ba (24 aa).

Residues Cys-18 and Cys-24 are joined by a disulfide bond.

As to expression, expressed by the skin glands.

It is found in the secreted. In terms of biological role, antibacterial activity against Gram-positive bacterium S.aureus. This is Brevinin-1Ba from Lithobates berlandieri (Rio Grande leopard frog).